Consider the following 427-residue polypeptide: Diaminobutyrate--2-oxoglutarate transaminase (427 aa).

Lys264 carries the post-translational modification N6-(pyridoxal phosphate)lysine.

The protein belongs to the class-III pyridoxal-phosphate-dependent aminotransferase family. Pyridoxal 5'-phosphate serves as cofactor.

It carries out the reaction L-2,4-diaminobutanoate + 2-oxoglutarate = L-aspartate 4-semialdehyde + L-glutamate. It participates in amine and polyamine biosynthesis; ectoine biosynthesis; L-ectoine from L-aspartate 4-semialdehyde: step 1/3. Functionally, catalyzes reversively the conversion of L-aspartate beta-semialdehyde (ASA) to L-2,4-diaminobutyrate (DABA) by transamination with L-glutamate. The sequence is that of Diaminobutyrate--2-oxoglutarate transaminase (ectB) from Wolinella succinogenes (strain ATCC 29543 / DSM 1740 / CCUG 13145 / JCM 31913 / LMG 7466 / NCTC 11488 / FDC 602W) (Vibrio succinogenes).